The primary structure comprises 190 residues: Recombination protein RecR (190 aa).

The segment at cysteine 58–cysteine 73 adopts a C4-type zinc-finger fold. The region spanning asparagine 81–proline 167 is the Toprim domain.

It belongs to the RecR family.

Its function is as follows. May play a role in DNA repair. It seems to be involved in an RecBC-independent recombinational process of DNA repair. It may act with RecF and RecO. The protein is Recombination protein RecR of Campylobacter jejuni subsp. doylei (strain ATCC BAA-1458 / RM4099 / 269.97).